The chain runs to 352 residues: MTALRPERDSGTAGDQGSSYGQPYGDSGAFGGGRYEESAAGEENRPPLLDDETVALRIPEPPAPRTAAGTGPIGGGPDGGGRAARRKAAKRRHGRRGAPRDQAPEEEAEQAPKAPLSRVEARRQARARKPGAAVVASRAIGEIFITTGVLMLLFVTYQLWWTNVRAHAQANQAASNLQDDWANGKRSPGSFEPGQGFALLHIPKLDVVVPIAEGISSKKVLDRGMVGHYAEDGLKTAMPDAKAGNFGLAGHRNTHGEPFRYINKLEPGDPIVVETQDKYFVYKMASILPVTSPSNVSVLDPVPKQSGFKGPGRYITLTTCTPEFTSKYRMIVWGKMVEERPRSKGKPDALVS.

Composition is skewed to basic and acidic residues over residues 1–10 and 34–45; these read MTALRPERDS and RYEESAAGEENR. The interval 1 to 132 is disordered; that stretch reads MTALRPERDS…RQARARKPGA (132 aa). The Cytoplasmic portion of the chain corresponds to 1-139; the sequence is MTALRPERDS…PGAAVVASRA (139 aa). A required for protein stability region spans residues 15–79; sequence DQGSSYGQPY…TGPIGGGPDG (65 aa). Residues 71–82 show a composition bias toward gly residues; it reads GPIGGGPDGGGR. Residues 83-97 are compositionally biased toward basic residues; the sequence is AARRKAAKRRHGRRG. Residues 140–160 form a helical membrane-spanning segment; that stretch reads IGEIFITTGVLMLLFVTYQLW. Residues 161–352 lie on the Extracellular side of the membrane; it reads WTNVRAHAQA…SKGKPDALVS (192 aa). Residues His-251 and Cys-320 contribute to the active site. The active-site Proton donor is Arg-329.

This sequence belongs to the bacterial sortase family. Class E subfamily.

The protein localises to the cell membrane. It catalyses the reaction The enzyme catalyzes a cell wall sorting reaction in which a surface protein with a sorting signal containing a LPXTG motif is cleaved between the Thr and Gly residue. The resulting threonine carboxyl end of the protein is covalently attached to a pentaglycine cross-bridge of peptidoglycan.. Functionally, transpeptidase that anchors surface proteins to the cell wall. Recognizes both Leu-Ala-x-Thr-Gly and Leu-Pro-x-Thr-Gly, with a preference for the former. Unlike the S.aureus sortase it cleaves not only the Thr-Gly motif but also the Ala-X bond; Ala-Glu and Ala-His bonds are better substrates than the Thr-Gly motif in vitro. Among its possible substrates are the chaplins ChpA, ChpB and ChpC; this enzyme is less important for ChpC attachment than is SrtE2. A double knockout mutant of srtE1 and srtE2 shows a developmental defect in aerial hyphae formation more dramatic than that due to chaplin deletion. The protein is Sortase SrtE1 of Streptomyces coelicolor (strain ATCC BAA-471 / A3(2) / M145).